Consider the following 293-residue polypeptide: Ribosomal RNA small subunit methyltransferase A (293 aa).

S-adenosyl-L-methionine-binding residues include Asn36, Leu38, Gly63, Glu84, Asp111, and Asn132.

Belongs to the class I-like SAM-binding methyltransferase superfamily. rRNA adenine N(6)-methyltransferase family. RsmA subfamily.

The protein localises to the cytoplasm. It catalyses the reaction adenosine(1518)/adenosine(1519) in 16S rRNA + 4 S-adenosyl-L-methionine = N(6)-dimethyladenosine(1518)/N(6)-dimethyladenosine(1519) in 16S rRNA + 4 S-adenosyl-L-homocysteine + 4 H(+). In terms of biological role, specifically dimethylates two adjacent adenosines (A1518 and A1519) in the loop of a conserved hairpin near the 3'-end of 16S rRNA in the 30S particle. May play a critical role in biogenesis of 30S subunits. The polypeptide is Ribosomal RNA small subunit methyltransferase A (Treponema denticola (strain ATCC 35405 / DSM 14222 / CIP 103919 / JCM 8153 / KCTC 15104)).